The following is a 302-amino-acid chain: Cuticle collagen dpy-13 (302 aa).

Triple-helical region stretches follow at residues glycine 106–alanine 135, glycine 154–proline 210, and glycine 219–proline 278. Residues glutamine 108 to cysteine 284 are disordered. Residues threonine 144–proline 159 show a composition bias toward pro residues. Low complexity predominate over residues proline 188–lysine 197. 2 stretches are compositionally biased toward pro residues: residues glutamine 247–aspartate 257 and glutamine 268–threonine 277.

Belongs to the cuticular collagen family. As to quaternary structure, collagen polypeptide chains are complexed within the cuticle by disulfide bonds and other types of covalent cross-links.

Its function is as follows. Nematode cuticles are composed largely of collagen-like proteins. The cuticle functions both as an exoskeleton and as a barrier to protect the worm from its environment. Mutations in dpy-13 affects the body shape. This chain is Cuticle collagen dpy-13 (dpy-13), found in Caenorhabditis elegans.